The sequence spans 47 residues: Protein PsbN (47 aa).

A helical membrane pass occupies residues 7 to 29; sequence VAISISCLLISFTGYALYTAFGN.

This sequence belongs to the PsbN family.

The protein resides in the plastid membrane. In terms of biological role, may play a role in photosystem I and II biogenesis. This chain is Protein PsbN, found in Aneura mirabilis (Parasitic liverwort).